Consider the following 33-residue polypeptide: Brevinin-2DYd (33 aa).

An intrachain disulfide couples C27 to C33.

Expressed by the skin glands.

The protein resides in the secreted. Functionally, antimicrobial peptide. A mixture of Brevinin-2DYc/2DYd is active against the Gram-positive bacterium S.aureus (MIC=15 uM) and the Gram-negative bacterium E.coli (MIC=15 uM). In Rana dybowskii (Dybovsky's frog), this protein is Brevinin-2DYd.